Reading from the N-terminus, the 407-residue chain is Argininosuccinate synthase (407 aa).

Residues 10–18 and alanine 37 each bind ATP; that span reads AYSGGLDTS. Residues tyrosine 90 and serine 95 each contribute to the L-citrulline site. Glycine 120 contributes to the ATP binding site. Threonine 122, asparagine 126, and aspartate 127 together coordinate L-aspartate. Asparagine 126 contacts L-citrulline. Residues arginine 130, serine 181, serine 190, glutamate 266, and tyrosine 278 each coordinate L-citrulline.

It belongs to the argininosuccinate synthase family. Type 1 subfamily. In terms of assembly, homotetramer.

The protein localises to the cytoplasm. It catalyses the reaction L-citrulline + L-aspartate + ATP = 2-(N(omega)-L-arginino)succinate + AMP + diphosphate + H(+). The protein operates within amino-acid biosynthesis; L-arginine biosynthesis; L-arginine from L-ornithine and carbamoyl phosphate: step 2/3. This Ruegeria sp. (strain TM1040) (Silicibacter sp.) protein is Argininosuccinate synthase.